A 534-amino-acid chain; its full sequence is Flavonoid-6-hydroxylase (534 aa).

A helical membrane pass occupies residues 3-23 (FISFVYTLIAFSSLLYFYLIW). Cysteine 467 lines the heme pocket.

The protein belongs to the cytochrome P450 family. It depends on heme as a cofactor. As to expression, expressed in leaves.

The protein localises to the membrane. It catalyses the reaction genkwanin + reduced [NADPH--hemoprotein reductase] + O2 = scutellarein 7-methyl ether + oxidized [NADPH--hemoprotein reductase] + H2O. The enzyme catalyses (2S)-sakuranetin + reduced [NADPH--hemoprotein reductase] + O2 = (2S)-7-methylcarthamidin + oxidized [NADPH--hemoprotein reductase] + H2O + H(+). It carries out the reaction apigenin 4',7-dimethyl ether + reduced [NADPH--hemoprotein reductase] + O2 = ladanein + oxidized [NADPH--hemoprotein reductase] + H2O + H(+). The catalysed reaction is (2S)-naringenin 4',7-dimethyl ether + reduced [NADPH--hemoprotein reductase] + O2 = (2S)-carthamidin-4',7-dimethyl ether + oxidized [NADPH--hemoprotein reductase] + H2O + H(+). The protein operates within flavonoid metabolism. Hydroxylase involved in the biosynthesis of polymethoxylated flavonoids natural products such as nevadensin and salvigenin, aroma compounds which contribute to the flavor of sweet basil, and exhibit pharmacological activities such as anti-allergic, anti-oxidant, antibacterial, anti-proliferative, and anti-inflammatory effects. Catalyzes the 6-hydroxylation of 7-O-methylated precursors such as the conversion of genkwanin (GENK) to scutellarein-7-methyl ether (SCU7Me). Can also use, with a lower efficiency, apigenin-7,4'-dimethyl ether (AdM), naringenin-7-methyl ether (SAK) and naringenin-7,4'-dimethyl ether (NdM) as substrates. The sequence is that of Flavonoid-6-hydroxylase from Ocimum basilicum (Sweet basil).